The following is a 266-amino-acid chain: Apolipoprotein A-I (266 aa).

An N-terminal signal peptide occupies residues 1-18; the sequence is MKAALLTLAVLFLTGSQA. A run of 2 repeats spans residues 67 to 88 and 89 to 110. The 10 X approximate tandem repeats stretch occupies residues 67-266; that stretch reads LKLLDNWDSL…DEATKKLNAQ (200 aa). M109 is subject to Methionine sulfoxide. One copy of the 3; half-length repeat lies at 111-121; that stretch reads KDLEEVKQKVQ. Tandem repeats lie at residues 122–143, 144–165, 166–187, 188–209, and 210–231. One copy of the 9; half-length repeat lies at 232–242; sequence PALEDLRQGLL. The stretch at 243–266 is repeat 10; it reads PVLESFKVSLLAAIDEATKKLNAQ.

Belongs to the apolipoprotein A1/A4/E family. In terms of assembly, homodimer. Interacts with APOA1BP and CLU. Component of a sperm activating protein complex (SPAP), consisting of APOA1, an immunoglobulin heavy chain, an immunoglobulin light chain and albumin. Interacts with NDRG1. Interacts with SCGB3A2. Interacts with NAXE and YJEFN3. Post-translationally, palmitoylated. In terms of processing, glycosylated. Phosphorylation sites are present in the extracellular medium. Major protein of plasma HDL, also found in chylomicrons. Synthesized in the liver and small intestine.

It is found in the secreted. Functionally, participates in the reverse transport of cholesterol from tissues to the liver for excretion by promoting cholesterol efflux from tissues and by acting as a cofactor for the lecithin cholesterol acyltransferase (LCAT). As part of the SPAP complex, activates spermatozoa motility. This is Apolipoprotein A-I (APOA1) from Canis lupus familiaris (Dog).